We begin with the raw amino-acid sequence, 296 residues long: Enoyl-CoA hydratase domain-containing protein 2, mitochondrial (296 aa).

Lysine 101 is modified (N6-acetyllysine; alternate). Lysine 101 is subject to N6-succinyllysine; alternate.

This sequence belongs to the enoyl-CoA hydratase/isomerase family.

The protein resides in the mitochondrion. In Bos taurus (Bovine), this protein is Enoyl-CoA hydratase domain-containing protein 2, mitochondrial (ECHDC2).